Consider the following 388-residue polypeptide: Succinate--CoA ligase [ADP-forming] subunit beta (388 aa).

Residues 9-244 (KSLFAEYGLP…PSQDDAREAH (236 aa)) form the ATP-grasp domain. ATP contacts are provided by residues lysine 46, 53–55 (GRG), glutamate 99, threonine 102, and glutamate 107. Asparagine 199 and aspartate 213 together coordinate Mg(2+). Substrate-binding positions include asparagine 264 and 321-323 (GIV).

Belongs to the succinate/malate CoA ligase beta subunit family. As to quaternary structure, heterotetramer of two alpha and two beta subunits. Requires Mg(2+) as cofactor.

It carries out the reaction succinate + ATP + CoA = succinyl-CoA + ADP + phosphate. It catalyses the reaction GTP + succinate + CoA = succinyl-CoA + GDP + phosphate. Its pathway is carbohydrate metabolism; tricarboxylic acid cycle; succinate from succinyl-CoA (ligase route): step 1/1. In terms of biological role, succinyl-CoA synthetase functions in the citric acid cycle (TCA), coupling the hydrolysis of succinyl-CoA to the synthesis of either ATP or GTP and thus represents the only step of substrate-level phosphorylation in the TCA. The beta subunit provides nucleotide specificity of the enzyme and binds the substrate succinate, while the binding sites for coenzyme A and phosphate are found in the alpha subunit. This chain is Succinate--CoA ligase [ADP-forming] subunit beta, found in Shewanella denitrificans (strain OS217 / ATCC BAA-1090 / DSM 15013).